A 603-amino-acid chain; its full sequence is Polypeptide N-acetylgalactosaminyltransferase 10 (603 aa).

Over 1–11 the chain is Cytoplasmic; it reads MRRKEKRLLQA. Residues 12–31 traverse the membrane as a helical; Signal-anchor for type II membrane protein segment; sequence VALALAALVLLPNVGLWALY. Residues 32–603 lie on the Lumenal side of the membrane; that stretch reads RERQPDGSPG…STVLENFNRN (572 aa). 2 N-linked (GlcNAc...) asparagine glycosylation sites follow: N124 and N146. Intrachain disulfides connect C135–C365, C356–C432, C471–C488, C523–C538, and C563–C578. Residues 144 to 253 form a catalytic subdomain A region; sequence LPNTSIIIPF…VNWLPPLLDR (110 aa). Substrate-binding residues include D185 and R214. D237 serves as a coordination point for Mn(2+). S238 is a substrate binding site. H239 contributes to the Mn(2+) binding site. The catalytic subdomain B stretch occupies residues 311 to 373; that stretch reads PFESPVMAGG…PCSRVGHIYR (63 aa). W342 provides a ligand contact to substrate. H370 contacts Mn(2+). Residues R373 and Y378 each coordinate substrate. A flexible loop region spans residues 373–384; sequence RKYVPYKVPAGV. One can recognise a Ricin B-type lectin domain in the interval 458–590; it reads AAWGEIRNVG…SSLTQQWLFE (133 aa). Residue N593 is glycosylated (N-linked (GlcNAc...) asparagine).

The protein belongs to the glycosyltransferase 2 family. GalNAc-T subfamily. Mn(2+) is required as a cofactor. As to expression, highly expressed in the sublingual gland, testis, small intestine, colon and ovary. Expressed at intermediate level in heart, brain, spleen, lung, stomach, cervix and uterus.

It localises to the golgi apparatus membrane. The catalysed reaction is L-seryl-[protein] + UDP-N-acetyl-alpha-D-galactosamine = a 3-O-[N-acetyl-alpha-D-galactosaminyl]-L-seryl-[protein] + UDP + H(+). It catalyses the reaction L-threonyl-[protein] + UDP-N-acetyl-alpha-D-galactosamine = a 3-O-[N-acetyl-alpha-D-galactosaminyl]-L-threonyl-[protein] + UDP + H(+). The protein operates within protein modification; protein glycosylation. Functionally, catalyzes the initial reaction in O-linked oligosaccharide biosynthesis, the transfer of an N-acetyl-D-galactosamine residue to a serine or threonine residue on the protein receptor. Has activity toward Muc5Ac and EA2 peptide substrates. This Rattus norvegicus (Rat) protein is Polypeptide N-acetylgalactosaminyltransferase 10 (Galnt10).